We begin with the raw amino-acid sequence, 388 residues long: Staphopain A (388 aa).

The signal sequence occupies residues 1–25 (MKRNFPKLIALSLIFSLSITPIANA). A propeptide spanning residues 26 to 214 (ESNSNIKAKD…TSQFKSNNYT (189 aa)) is cleaved from the precursor. Residues cysteine 238, histidine 334, and asparagine 355 contribute to the active site.

This sequence belongs to the peptidase C47 family. In terms of assembly, in the cytoplasm, prematurely activated/folded ScpA forms a stable non-covalent complex with ScpB. In terms of processing, cleavage leads to the activation of ScpA probably by an auto-catalytic manner.

Its subcellular location is the secreted. The enzyme catalyses Broad endopeptidase action on proteins including elastin, but rather limited hydrolysis of small-molecule substrates. Assays are conveniently made with hemoglobin, casein or Z-Phe-Arg-NHMec as substrate.. Prematurely activated/folded staphopain A is inhibited by staphostatin A (ScpB), which is probably required to protect staphylococcal cytoplasmic proteins from degradation by ScpA. Also inactivated by heavy metal ions such as Hg(2+) or Ag(+), iodoacetamide, E-64 and human plasma. Its function is as follows. Cysteine protease that plays an important role in the inhibition of host innate immune response. Cleaves host elastins found in connective tissues, pulmonary surfactant protein A in the lungs, and the chemokine receptor CXCR2 on leukocytes. Proteolytic cleavage of surfactant protein A impairs bacterial phagocytosis by neutrophils while CXCR2 degradation blocks neutrophil activation and chemotaxis. Additionally, promotes vascular leakage by activating the plasma kallikerin/kinin system, resulting in hypotension. In Staphylococcus aureus, this protein is Staphopain A (sspP).